Reading from the N-terminus, the 342-residue chain is Holliday junction branch migration complex subunit RuvB (342 aa).

The large ATPase domain (RuvB-L) stretch occupies residues 1–181; sequence MENRMVTPFD…FGMLCAMEFY (181 aa). ATP contacts are provided by residues leucine 20, arginine 21, glycine 62, lysine 65, threonine 66, threonine 67, 128-130, arginine 171, tyrosine 181, and arginine 218; that span reads EDY. Threonine 66 contributes to the Mg(2+) binding site. The tract at residues 182 to 252 is small ATPAse domain (RuvB-S); the sequence is TDEELMEIVV…GAKAALDLLE (71 aa). The interval 255–342 is head domain (RuvB-H); it reads KEGLDKIDNK…KDNQVSIFNK (88 aa). Residues arginine 310 and arginine 315 each coordinate DNA.

Belongs to the RuvB family. As to quaternary structure, homohexamer. Forms an RuvA(8)-RuvB(12)-Holliday junction (HJ) complex. HJ DNA is sandwiched between 2 RuvA tetramers; dsDNA enters through RuvA and exits via RuvB. An RuvB hexamer assembles on each DNA strand where it exits the tetramer. Each RuvB hexamer is contacted by two RuvA subunits (via domain III) on 2 adjacent RuvB subunits; this complex drives branch migration. In the full resolvosome a probable DNA-RuvA(4)-RuvB(12)-RuvC(2) complex forms which resolves the HJ.

It localises to the cytoplasm. The catalysed reaction is ATP + H2O = ADP + phosphate + H(+). In terms of biological role, the RuvA-RuvB-RuvC complex processes Holliday junction (HJ) DNA during genetic recombination and DNA repair, while the RuvA-RuvB complex plays an important role in the rescue of blocked DNA replication forks via replication fork reversal (RFR). RuvA specifically binds to HJ cruciform DNA, conferring on it an open structure. The RuvB hexamer acts as an ATP-dependent pump, pulling dsDNA into and through the RuvAB complex. RuvB forms 2 homohexamers on either side of HJ DNA bound by 1 or 2 RuvA tetramers; 4 subunits per hexamer contact DNA at a time. Coordinated motions by a converter formed by DNA-disengaged RuvB subunits stimulates ATP hydrolysis and nucleotide exchange. Immobilization of the converter enables RuvB to convert the ATP-contained energy into a lever motion, pulling 2 nucleotides of DNA out of the RuvA tetramer per ATP hydrolyzed, thus driving DNA branch migration. The RuvB motors rotate together with the DNA substrate, which together with the progressing nucleotide cycle form the mechanistic basis for DNA recombination by continuous HJ branch migration. Branch migration allows RuvC to scan DNA until it finds its consensus sequence, where it cleaves and resolves cruciform DNA. The polypeptide is Holliday junction branch migration complex subunit RuvB (Clostridium botulinum (strain 657 / Type Ba4)).